The chain runs to 83 residues: Hainantoxin-III (83 aa).

The N-terminal stretch at 1-21 (MKASMFLALAGLVLLFVVGYA) is a signal peptide. The propeptide occupies 22 to 48 (SESEEKEFPRELLSKIFALDDFKGEER). Disulfide bonds link Cys-50–Cys-65, Cys-57–Cys-70, and Cys-64–Cys-77. Leu-81 bears the Leucine amide mark.

Belongs to the neurotoxin 10 (Hwtx-1) family. 15 (Hntx-3) subfamily. Monomer. Expressed by the venom gland.

It localises to the secreted. Functionally, selective antagonist of neuronal tetrodotoxin (TTX)-sensitive voltage-gated sodium channels (IC(50)=1270 nM on Nav1.1/SCN1A, 270 nM on Nav1.2/SCN2A, 491 nM on Nav1.3/SCN3A and 232 nM on Nav1.7/SCN9A). This toxin suppress Nav1.7 current amplitude without significantly altering the activation, inactivation, and repriming kinetics. Short extreme depolarizations partially activate the toxin-bound channel, indicating voltage-dependent inhibition of this toxin. This toxin increases the deactivation of the Nav1.7 current after extreme depolarizations. The toxin-Nav1.7 complex is gradually dissociated upon prolonged strong depolarizations in a voltage-dependent manner, and the unbound toxin rebinds to Nav1.7 after a long repolarization. Moreover, analysis of chimeric channels showed that the DIIS3-S4 linker is critical for toxin binding to Nav1.7. These data are consistent with this toxin interacting with Nav1.7 site 4 and trapping the domain II voltage sensor in the closed state. This Cyriopagopus hainanus (Chinese bird spider) protein is Hainantoxin-III.